We begin with the raw amino-acid sequence, 498 residues long: Cytochrome P450 monooxygenase 71 (498 aa).

A helical membrane pass occupies residues Tyr-7–Ser-24. Residue Asn-425 is glycosylated (N-linked (GlcNAc...) asparagine). Residue Cys-440 coordinates heme.

This sequence belongs to the cytochrome P450 family. Heme is required as a cofactor.

The protein localises to the membrane. The protein operates within secondary metabolite biosynthesis. Functionally, cytochrome P450 monooxygenase that is able to use dehydroabietic acid and testosterone as substrates for oxidation, suggesting that the natural substrate(s) may be structurally related to steroid compounds. This chain is Cytochrome P450 monooxygenase 71, found in Postia placenta (strain ATCC 44394 / Madison 698-R) (Brown rot fungus).